The sequence spans 450 residues: Serine/threonine-protein kinase-transforming protein Rmil (450 aa).

Composition is skewed to basic and acidic residues over residues 1–14 and 49–73; these read MEAVIKDLIRDQGV and QRERKSSSSSEDRNRMKTLGRRDSS. The disordered stretch occupies residues 1-80; it reads MEAVIKDLIR…DSSDDWEIPD (80 aa). Positions 83–343 constitute a Protein kinase domain; that stretch reads ITVGQRIGSG…PQILASIELL (261 aa). ATP-binding positions include 89 to 97 and lysine 109; that span reads IGSGSFGTV. The active-site Proton acceptor is aspartate 202.

The protein belongs to the protein kinase superfamily. TKL Ser/Thr protein kinase family. RAF subfamily.

The enzyme catalyses L-seryl-[protein] + ATP = O-phospho-L-seryl-[protein] + ADP + H(+). It carries out the reaction L-threonyl-[protein] + ATP = O-phospho-L-threonyl-[protein] + ADP + H(+). This Avian rous-associated virus type 1 protein is Serine/threonine-protein kinase-transforming protein Rmil (V-RMIL).